A 91-amino-acid polypeptide reads, in one-letter code: ATP-dependent Clp protease adapter protein ClpS (91 aa).

The protein belongs to the ClpS family. Binds to the N-terminal domain of the chaperone ClpA.

Involved in the modulation of the specificity of the ClpAP-mediated ATP-dependent protein degradation. The chain is ATP-dependent Clp protease adapter protein ClpS from Helicobacter pylori (strain ATCC 700392 / 26695) (Campylobacter pylori).